A 166-amino-acid chain; its full sequence is MPDAEQLPDGWEKRTSRSTGMSYYLNMYTKESQWDQPTEPAKKAGGGSAGGGDAPDEVHCLHLLVKHKGSRRPSSWREANITRTKEEAQLLLEVYRNKIVQQEATFDELARSYSDCSSAKRGGDLGKFGRGQMQAAFEDAAFKLNVNQLSGIVDSDSGLHIILRKA.

Positions 5–39 constitute a WW domain; that stretch reads EQLPDGWEKRTSRSTGMSYYLNMYTKESQWDQPTE. The interval 32–53 is disordered; that stretch reads SQWDQPTEPAKKAGGGSAGGGD. Residues 44 to 53 are compositionally biased toward gly residues; that stretch reads AGGGSAGGGD. The PpiC domain maps to 55-166; that stretch reads PDEVHCLHLL…SGLHIILRKA (112 aa).

It catalyses the reaction [protein]-peptidylproline (omega=180) = [protein]-peptidylproline (omega=0). This Drosophila melanogaster (Fruit fly) protein is Putative peptidyl-prolyl cis-trans isomerase dodo (dod).